Consider the following 79-residue polypeptide: Dolichyl-diphosphooligosaccharide--protein glycosyltransferase subunit TMEM258 (79 aa).

The next 2 membrane-spanning stretches (helical) occupy residues 17–37 (VFPHLTVVLLAIGMFFKAWFF) and 59–79 (VASLFMGFGVHFLLLWVGIFV).

This sequence belongs to the OST5 family. In terms of assembly, component of the oligosaccharyltransferase (OST) complex.

It is found in the membrane. It localises to the endoplasmic reticulum. The protein resides in the cytoplasm. Its pathway is protein modification; protein glycosylation. Functionally, subunit of the oligosaccharyl transferase (OST) complex that catalyzes the initial transfer of a defined glycan (Glc(3)Man(9)GlcNAc(2) in eukaryotes) from the lipid carrier dolichol-pyrophosphate to an asparagine residue within an Asn-X-Ser/Thr consensus motif in nascent polypeptide chains, the first step in protein N-glycosylation. N-glycosylation occurs cotranslationally and the complex associates with the Sec61 complex at the channel-forming translocon complex that mediates protein translocation across the endoplasmic reticulum (ER). All subunits are required for a maximal enzyme activity. The sequence is that of Dolichyl-diphosphooligosaccharide--protein glycosyltransferase subunit TMEM258 from Danio rerio (Zebrafish).